A 483-amino-acid polypeptide reads, in one-letter code: Cyclic AMP-dependent transcription factor ATF-7 (483 aa).

A transactivation domain region spans residues M1 to M285. The C2H2-type zinc finger occupies F7 to H31. A Phosphothreonine; by MAPK11 modification is found at T51. Phosphothreonine is present on residues T53 and T101. A Glycyl lysine isopeptide (Lys-Gly) (interchain with G-Cter in SUMO1) cross-link involves residue K107. Disordered regions lie at residues E110 to P148 and H299 to A345. Composition is skewed to low complexity over residues V114 to P126 and Q307 to G320. Positions T326–R343 are enriched in basic and acidic residues. The 64-residue stretch at D332 to H395 folds into the bZIP domain. The interval R334 to K354 is basic motif. The interval L360 to L388 is leucine-zipper. Disordered stretches follow at residues T407–L440 and L464–R483. S413 and S423 each carry phosphoserine. Positions Q429–L440 are enriched in polar residues.

The protein belongs to the bZIP family. In terms of assembly, homodimer; binds DNA as homodimer. Heterodimer; heterodimerizes with other members of ATF family and with JUN family members. Interacts with JNK2; the interaction does not phosphorylate ATF7 but acts as a docking site for other ATF-associated partners such as JUN family members. Interacts (via its transactivation domain) with TAF12 (isoforms TAFII15 and TAFII20); the interaction potentiates the transactivation activity (isoform TAFII20 only) and is inhibited by ATF7 sumoylation. Interacts with TAF4; the interaction inhibits the TAF12-dependent transactivation. Interacts with MAPK9; the interaction does not phosphorylate ATF7 but acts as a docking site for ATF7-associated partners such as JUN. Interacts with Ku complex components XRCC6 and XRCC7. Interacts with TERT. Post-translationally, on EGF stimulation, phosphorylated first on Thr-53 allowing subsequent phosphorylation on Thr-51. This latter phosphorylation prevents sumoylation, increases binding to TAF12 and enhances transcriptional activity. Social isolation stress as well as TNF-alpha also induce the phosphorylation of ATF7. Phosphorylated in proliferating colonic and small intestinal epithelial cells. Sumoylation delays nuclear localization and inhibits transactivation activity through preventing binding to TAF12. RANBP2 appears to be the specific E3 ligase.

Its subcellular location is the nucleus. The protein localises to the nucleoplasm. It localises to the chromosome. The protein resides in the telomere. Its function is as follows. Stress-responsive chromatin regulator that plays a role in various biological processes including innate immunological memory, adipocyte differentiation or telomerase regulation. In absence of stress, contributes to the formation of heterochromatin and heterochromatin-like structure by recruiting histone H3K9 tri- and di-methyltransferases thus silencing the transcription of target genes such as STAT1 in adipocytes, or genes involved in innate immunity in macrophages and adipocytes. Stress induces ATF7 phosphorylation that disrupts interactions with histone methyltransferase and enhances the association with coactivators containing histone acetyltransferase and/or histone demethylase, leading to disruption of the heterochromatin-like structure and subsequently transcriptional activation. In response to TNF-alpha, which is induced by various stresses, phosphorylated ATF7 and telomerase are released from telomeres leading to telomere shortening. Plays also a role in maintaining epithelial regenerative capacity and protecting against cell death during intestinal epithelial damage and repair. This Pongo abelii (Sumatran orangutan) protein is Cyclic AMP-dependent transcription factor ATF-7 (ATF7).